The chain runs to 1518 residues: Hormone receptor 4 (1518 aa).

Disordered stretches follow at residues 30–50, 145–327, 380–587, 672–820, and 887–913; these read RCSS…DLLA, TSST…KLSE, PSRI…QPQA, VGVG…SSVA, and SSNS…EPTD. Residues 34–46 are compositionally biased toward polar residues; sequence DGESIADTSTSSP. Low complexity-rich tracts occupy residues 145–189 and 208–219; these read TSST…SSSG and SSSSAISAAAAS. Residues 238 to 260 show a composition bias toward gly residues; the sequence is EGGGPAGDGSGATGGGNTSGGST. The segment covering 291 to 323 has biased composition (low complexity); sequence STTTTTGRPTLTPTNGVLSSASAGTGISTGSSA. Residues 400 to 429 show a composition bias toward basic and acidic residues; sequence QRERERERDRERDRERERERDRDREREREQ. 2 stretches are compositionally biased toward polar residues: residues 430 to 451 and 475 to 489; these read SISS…QLSH and RKSS…SQSM. Composition is skewed to low complexity over residues 490-529, 546-586, 681-705, and 738-799; these read QHLT…PHSL, HHQQ…QQPQ, GSVQ…QTPS, and GQSH…PSSS. Gly residues-rich tracts occupy residues 800–812 and 892–902; these read SGGG…GVGG and GLGGVGGGMGG. Positions 918–993 form a DNA-binding region, nuclear receptor; that stretch reads PLVCMICEDK…QGMVLQAVRE (76 aa). NR C4-type zinc fingers lie at residues 921–941 and 957–976; these read CMIC…CEGC and CVAD…CQYC. Disordered stretches follow at residues 1015–1101, 1142–1210, and 1341–1371; these read KHKK…AAVA, LLQA…LPPH, and KRRG…STPI. Positions 1021 to 1060 are enriched in low complexity; the sequence is QKQQQQAAQQQQQQAAAQQQHQQQQQHQQHQQHQQQQLHS. The span at 1061–1077 shows a compositional bias: basic residues; that stretch reads PLHHHHHQGHQSHHAQQ. Low complexity-rich tracts occupy residues 1078–1101 and 1144–1193; these read QHHP…AAVA and QAPP…HHQQ. Residues 1194–1205 show a composition bias toward gly residues; sequence QGGGGGGAGGGA. An NR LBD domain is found at 1250 to 1518; the sequence is HALGMIQTLI…PFVLNSASIR (269 aa). Positions 1351–1368 are enriched in low complexity; it reads HGSPASTPLSTPTGTPLS.

The protein belongs to the nuclear hormone receptor family. NR1 subfamily. As to expression, during L2 and L3 stages, strong constitutive expression is seen in the ring gland. Lower expression is detected in specific neurons of the central nervous system (CNS) (at protein level).

Its subcellular location is the nucleus. Its function is as follows. Coordinates growth and maturation by mediating endocrine responses to the attainment of critical weight during larval development. Plays a central role in the genetic cascades triggered by the steroid hormone ecdysone at the onset of metamorphosis, acting as both a repressor of the early ecdysone-induced regulatory genes and an inducer of the ftz-f1 midprepupal competence factor. This Drosophila melanogaster (Fruit fly) protein is Hormone receptor 4 (Hr4).